A 300-amino-acid polypeptide reads, in one-letter code: UDP-3-O-acyl-N-acetylglucosamine deacetylase (300 aa).

Residues H78, H237, and D241 each coordinate Zn(2+). H264 serves as the catalytic Proton donor.

It belongs to the LpxC family. The cofactor is Zn(2+).

The catalysed reaction is a UDP-3-O-[(3R)-3-hydroxyacyl]-N-acetyl-alpha-D-glucosamine + H2O = a UDP-3-O-[(3R)-3-hydroxyacyl]-alpha-D-glucosamine + acetate. Its pathway is glycolipid biosynthesis; lipid IV(A) biosynthesis; lipid IV(A) from (3R)-3-hydroxytetradecanoyl-[acyl-carrier-protein] and UDP-N-acetyl-alpha-D-glucosamine: step 2/6. Functionally, catalyzes the hydrolysis of UDP-3-O-myristoyl-N-acetylglucosamine to form UDP-3-O-myristoylglucosamine and acetate, the committed step in lipid A biosynthesis. This chain is UDP-3-O-acyl-N-acetylglucosamine deacetylase, found in Acinetobacter baumannii (strain ATCC 17978 / DSM 105126 / CIP 53.77 / LMG 1025 / NCDC KC755 / 5377).